We begin with the raw amino-acid sequence, 74 residues long: uncharacterized protein (74 aa).

This is an uncharacterized protein from Bacillus subtilis (strain 168).